A 242-amino-acid polypeptide reads, in one-letter code: Ribonuclease PH (242 aa).

Residues Arg89 and 127–129 (GTR) each bind phosphate.

The protein belongs to the RNase PH family. As to quaternary structure, homohexameric ring arranged as a trimer of dimers.

The enzyme catalyses tRNA(n+1) + phosphate = tRNA(n) + a ribonucleoside 5'-diphosphate. Phosphorolytic 3'-5' exoribonuclease that plays an important role in tRNA 3'-end maturation. Removes nucleotide residues following the 3'-CCA terminus of tRNAs; can also add nucleotides to the ends of RNA molecules by using nucleoside diphosphates as substrates, but this may not be physiologically important. Probably plays a role in initiation of 16S rRNA degradation (leading to ribosome degradation) during starvation. This chain is Ribonuclease PH, found in Neisseria meningitidis serogroup A / serotype 4A (strain DSM 15465 / Z2491).